An 831-amino-acid polypeptide reads, in one-letter code: AdoMet-dependent rRNA methyltransferase SPB1 (831 aa).

S-adenosyl-L-methionine-binding residues include G58, W60, D78, D94, and D119. Catalysis depends on K159, which acts as the Proton acceptor. Coiled coils occupy residues 346 to 389 (LTED…QMNM) and 440 to 479 (NDIN…ERDA). Disordered regions lie at residues 492-535 (DEGW…ADQR) and 565-645 (MNKK…DQQS). Residues 499 to 510 (ESDKEGSDKETE) are compositionally biased toward basic and acidic residues. Acidic residues-rich tracts occupy residues 511–526 (ANDY…DDDE), 594–611 (MEVD…DSDF), and 618–631 (PDEE…DNEN). The segment covering 632–645 (DVSRKYSKAKDQQS) has biased composition (basic and acidic residues). Residues 729 to 782 (LEAQGRKKLRALKRLEKLKKKSDMINEDSAKSERDKADEIQKLMKKLTKKQKTK) are a coiled coil.

The protein belongs to the class I-like SAM-binding methyltransferase superfamily. RNA methyltransferase RlmE family. SPB1 subfamily. Component of the nucleolar and nucleoplasmic pre-60S ribosomal particle.

The protein resides in the nucleus. Its subcellular location is the nucleolus. The enzyme catalyses a ribonucleotide in rRNA + S-adenosyl-L-methionine = a 2'-O-methylribonucleotide in rRNA + S-adenosyl-L-homocysteine + H(+). Functionally, required for proper assembly of pre-ribosomal particles during the biogenesis of the 60S ribosomal subunit. The chain is AdoMet-dependent rRNA methyltransferase SPB1 from Debaryomyces hansenii (strain ATCC 36239 / CBS 767 / BCRC 21394 / JCM 1990 / NBRC 0083 / IGC 2968) (Yeast).